A 239-amino-acid chain; its full sequence is tRNA (guanine-N(1)-)-methyltransferase (239 aa).

S-adenosyl-L-methionine is bound by residues Gly108 and 127-132; that span reads LGDFVL.

This sequence belongs to the RNA methyltransferase TrmD family. In terms of assembly, homodimer.

It is found in the cytoplasm. The enzyme catalyses guanosine(37) in tRNA + S-adenosyl-L-methionine = N(1)-methylguanosine(37) in tRNA + S-adenosyl-L-homocysteine + H(+). Specifically methylates guanosine-37 in various tRNAs. This is tRNA (guanine-N(1)-)-methyltransferase from Streptococcus thermophilus (strain ATCC BAA-250 / LMG 18311).